A 79-amino-acid chain; its full sequence is Cell division protein ZapB (79 aa).

Residues 3–79 (LEVFEKLEAK…QALLGRMEEV (77 aa)) are a coiled coil. The segment covering 36–45 (SLTQEVQSAQ) has biased composition (polar residues). The interval 36–63 (SLTQEVQSAQHQREELERENNSLKEQQS) is disordered. Over residues 46–57 (HQREELERENNS) the composition is skewed to basic and acidic residues.

Belongs to the ZapB family. In terms of assembly, homodimer. The ends of the coiled-coil dimer bind to each other, forming polymers. Interacts with FtsZ.

It is found in the cytoplasm. Non-essential, abundant cell division factor that is required for proper Z-ring formation. It is recruited early to the divisome by direct interaction with FtsZ, stimulating Z-ring assembly and thereby promoting cell division earlier in the cell cycle. Its recruitment to the Z-ring requires functional FtsA or ZipA. This Salmonella agona (strain SL483) protein is Cell division protein ZapB.